The chain runs to 393 residues: G protein-activated inward rectifier potassium channel 3 (393 aa).

Positions 1–23 (MAQENAAFSPGSEEPPRRRGRQR) are disordered. At 1–57 (MAQENAAFSPGSEEPPRRRGRQRYVEKDGRCNVQQGNVRETYRYLTDLFTTLVDLQW) the chain is on the cytoplasmic side. A helical transmembrane segment spans residues 58–82 (RLSLLFFVLAYALTWLFFGAIWWLI). Topologically, residues 83–106 (AYGRGDLEHLEDTAWTPCVNNLNG) are extracellular. The helical; Pore-forming intramembrane region spans 107 to 118 (FVAAFLFSIETE). An intramembrane region (pore-forming) is located at residues 119 to 125 (TTIGYGH). The Selectivity filter motif lies at 120 to 125 (TIGYGH). At 126-134 (RVITDQCPE) the chain is on the extracellular side. Residues 135–156 (GIVLLLLQAILGSMVNAFMVGC) traverse the membrane as a helical segment. The Cytoplasmic segment spans residues 157 to 393 (MFVKISQPNK…LPPPESESKV (237 aa)). Residues 360–393 (KVEEEGAGEGAGAGDGADKEQNGCLPPPESESKV) form a disordered region. Positions 384–393 (LPPPESESKV) are enriched in pro residues. The short motif at 390–393 (ESKV) is the PDZ-binding element.

Belongs to the inward rectifier-type potassium channel (TC 1.A.2.1) family. KCNJ9 subfamily. As to quaternary structure, associates with KCNJ3/GIRK1 to form a G-protein-activated heteromultimer pore-forming unit. Interacts (via PDZ-binding motif) with SNX27 (via PDZ domain); the interaction is required when endocytosed to prevent degradation in lysosomes and promote recycling to the plasma membrane.

It is found in the membrane. The enzyme catalyses K(+)(in) = K(+)(out). Its function is as follows. This receptor is controlled by G proteins. Inward rectifier potassium channels are characterized by a greater tendency to allow potassium to flow into the cell rather than out of it. Their voltage dependence is regulated by the concentration of extracellular potassium; as external potassium is raised, the voltage range of the channel opening shifts to more positive voltages. The inward rectification is mainly due to the blockage of outward current by internal magnesium. Unable to produce channel activity when expressed alone but forms a functional channel in association with KCNJ3/GIRK1. In Rattus norvegicus (Rat), this protein is G protein-activated inward rectifier potassium channel 3 (Kcnj9).